Here is a 52-residue protein sequence, read N- to C-terminus: Large ribosomal subunit protein bL32c (52 aa).

Belongs to the bacterial ribosomal protein bL32 family.

The protein resides in the plastid. Its subcellular location is the chloroplast. This Citrus sinensis (Sweet orange) protein is Large ribosomal subunit protein bL32c.